Here is a 37-residue protein sequence, read N- to C-terminus: Large ribosomal subunit protein bL36 (37 aa).

Belongs to the bacterial ribosomal protein bL36 family.

The sequence is that of Large ribosomal subunit protein bL36 from Helicobacter pylori (strain HPAG1).